Here is a 278-residue protein sequence, read N- to C-terminus: Probable septum site-determining protein MinC (278 aa).

The protein belongs to the MinC family. In terms of assembly, interacts with MinD and FtsZ.

Cell division inhibitor that blocks the formation of polar Z ring septums. Rapidly oscillates between the poles of the cell to destabilize FtsZ filaments that have formed before they mature into polar Z rings. Prevents FtsZ polymerization. The polypeptide is Probable septum site-determining protein MinC (Gloeobacter violaceus (strain ATCC 29082 / PCC 7421)).